A 352-amino-acid polypeptide reads, in one-letter code: N-acetyl-gamma-glutamyl-phosphate reductase (352 aa).

Cys-155 is an active-site residue.

It belongs to the NAGSA dehydrogenase family. Type 1 subfamily.

The protein localises to the cytoplasm. It carries out the reaction N-acetyl-L-glutamate 5-semialdehyde + phosphate + NADP(+) = N-acetyl-L-glutamyl 5-phosphate + NADPH + H(+). It functions in the pathway amino-acid biosynthesis; L-arginine biosynthesis; N(2)-acetyl-L-ornithine from L-glutamate: step 3/4. Functionally, catalyzes the NADPH-dependent reduction of N-acetyl-5-glutamyl phosphate to yield N-acetyl-L-glutamate 5-semialdehyde. The sequence is that of N-acetyl-gamma-glutamyl-phosphate reductase from Crocosphaera subtropica (strain ATCC 51142 / BH68) (Cyanothece sp. (strain ATCC 51142)).